Here is a 290-residue protein sequence, read N- to C-terminus: GTPase Era (290 aa).

Positions 2-169 (KSGFVSIIGR…KDKIYANLQE (168 aa)) constitute an Era-type G domain. Residues 10-17 (GRPSTGKS) form a G1 region. 10–17 (GRPSTGKS) contacts GTP. Positions 36–40 (QTTRN) are G2. The G3 stretch occupies residues 57 to 60 (DTPG). Residues 57–61 (DTPGF) and 119–122 (NKID) contribute to the GTP site. Residues 119–122 (NKID) are G4. Residues 148-150 (ISA) form a G5 region. Positions 200-276 (LKEELPYSLY…DLFLQVKLRK (77 aa)) constitute a KH type-2 domain.

It belongs to the TRAFAC class TrmE-Era-EngA-EngB-Septin-like GTPase superfamily. Era GTPase family. In terms of assembly, monomer.

The protein resides in the cytoplasm. It localises to the cell inner membrane. Its function is as follows. An essential GTPase that binds both GDP and GTP, with rapid nucleotide exchange. Plays a role in 16S rRNA processing and 30S ribosomal subunit biogenesis and possibly also in cell cycle regulation and energy metabolism. The chain is GTPase Era from Borrelia hermsii (strain HS1 / DAH).